A 241-amino-acid polypeptide reads, in one-letter code: Transcriptional regulatory protein SrrA (241 aa).

The region spanning 4–117 is the Response regulatory domain; it reads EILIVDDEDR…EVVLRVKALL (114 aa). Asp53 carries the post-translational modification 4-aspartylphosphate. Residues 133 to 233 constitute a DNA-binding region (ompR/PhoB-type); the sequence is RDVIEFKHLE…VWGVGYKFEV (101 aa).

In terms of processing, phosphorylated by SrrB.

The protein resides in the cytoplasm. Member of the two-component regulatory system SrrA/SrrB, which is involved in the global regulation of staphylococcal virulence factors in response to environmental oxygen levels as well as biofilm formation. Also plays an essential role in host-derived nitric oxide resistance by regulating hmp/flavohemoglobin, an enzyme that detoxifies nitric oxide by converting it to nitrate. Functions as a transcription regulator by direct binding to promoter regions of target genes. The chain is Transcriptional regulatory protein SrrA (srrA) from Staphylococcus aureus (strain NCTC 8325 / PS 47).